We begin with the raw amino-acid sequence, 223 residues long: Sigma non-opioid intracellular receptor 1 (223 aa).

Topologically, residues 1-9 (MPWAVGRRW) are lumenal. Positions 2–8 (PWAVGRR) are targeting to endoplasmic reticulum-associated lipid droplets. A helical membrane pass occupies residues 10 to 30 (AWITLFLTIVAVLIQAVWLWL). Topologically, residues 31–223 (GTQSFVFQRE…LTTYLFGQDP (193 aa)) are cytoplasmic. An important for ligand-binding region spans residues 99 to 106 (SLSEYVLL). Residues 177–223 (VIPSTLAFALSDTIFSTQDFLTLFYTLRAYARGLRLELTTYLFGQDP) are C-terminal hydrophobic region.

It belongs to the ERG2 family. In terms of assembly, homotrimer. Interacts with KCNA2; cocaine consumption leads to increased interaction. Forms a ternary complex with ANK2 and ITPR3. The complex is disrupted by agonists. Interacts with KCNA4. Interacts with RNF112 in an oxidative stress-regulated manner. As to expression, expressed in ependymocytes and neurons throughout the CNS from the olfactory bulb to the spinal cord. Expressed by progenitor, mature and satellite oligodendrocytes and by Schwann cells (at protein level). Expressed in liver, intestine, kidney, brain, lung and heart. Expressed by retinal cells.

The protein resides in the nucleus inner membrane. It localises to the nucleus outer membrane. Its subcellular location is the nucleus envelope. It is found in the cytoplasmic vesicle. The protein localises to the endoplasmic reticulum membrane. The protein resides in the membrane. It localises to the lipid droplet. Its subcellular location is the cell junction. It is found in the cell membrane. The protein localises to the cell projection. The protein resides in the growth cone. It localises to the postsynaptic density membrane. Its function is as follows. Functions in lipid transport from the endoplasmic reticulum and is involved in a wide array of cellular functions probably through regulation of the biogenesis of lipid microdomains at the plasma membrane. Involved in the regulation of different receptors it plays a role in BDNF signaling and EGF signaling. Also regulates ion channels like the potassium channel and could modulate neurotransmitter release. Plays a role in calcium signaling through modulation together with ANK2 of the ITP3R-dependent calcium efflux at the endoplasmic reticulum. Plays a role in several other cell functions including proliferation, survival and death. Originally identified for its ability to bind various psychoactive drugs it is involved in learning processes, memory and mood alteration. Necessary for proper mitochondrial axonal transport in motor neurons, in particular the retrograde movement of mitochondria. Plays a role in protecting cells against oxidative stress-induced cell death via its interaction with RNF112. The polypeptide is Sigma non-opioid intracellular receptor 1 (Sigmar1) (Rattus norvegicus (Rat)).